The sequence spans 750 residues: Photosystem I P700 chlorophyll a apoprotein A1 (750 aa).

8 consecutive transmembrane segments (helical) span residues 70–93 (VFSAHFGQLSIIFLWLSGMYFHGA), 156–179 (LYCTAIGALVFAALMLFAGWFHYH), 195–219 (LNHHLAGLLGLGSLSWAGHQVHVSL), 291–309 (IAHHHLAIAILFLIAGHMY), 346–369 (WHAQLSLNLAMLGSLTIVVAHHMY), 385–411 (LSLFTHHMWIGGFLIVGAAAHAAIFMV), 433–455 (AIISHLNWVCIFLGFHSFGLYIH), and 531–549 (FLVHHIHAFTIHVTVLILL). Residues cysteine 573 and cysteine 582 each coordinate [4Fe-4S] cluster. 2 helical membrane-spanning segments follow: residues 589-610 (HVFLGLFWMYNAISVVIFHFSW) and 664-686 (LSAYGLFFLGAHFVWAFSLMFLF). Histidine 675 contacts chlorophyll a'. Chlorophyll a contacts are provided by methionine 683 and tyrosine 691. Residue tryptophan 692 participates in phylloquinone binding. The helical transmembrane segment at 724-744 (AVGVTHYLLGGIATTWAFFLA) threads the bilayer.

This sequence belongs to the PsaA/PsaB family. The PsaA/B heterodimer binds the P700 chlorophyll special pair and subsequent electron acceptors. PSI consists of a core antenna complex that captures photons, and an electron transfer chain that converts photonic excitation into a charge separation. The eukaryotic PSI reaction center is composed of at least 11 subunits. Requires P700 is a chlorophyll a/chlorophyll a' dimer, A0 is one or more chlorophyll a, A1 is one or both phylloquinones and FX is a shared 4Fe-4S iron-sulfur center. as cofactor.

The protein localises to the plastid. Its subcellular location is the chloroplast thylakoid membrane. It catalyses the reaction reduced [plastocyanin] + hnu + oxidized [2Fe-2S]-[ferredoxin] = oxidized [plastocyanin] + reduced [2Fe-2S]-[ferredoxin]. In terms of biological role, psaA and PsaB bind P700, the primary electron donor of photosystem I (PSI), as well as the electron acceptors A0, A1 and FX. PSI is a plastocyanin-ferredoxin oxidoreductase, converting photonic excitation into a charge separation, which transfers an electron from the donor P700 chlorophyll pair to the spectroscopically characterized acceptors A0, A1, FX, FA and FB in turn. Oxidized P700 is reduced on the lumenal side of the thylakoid membrane by plastocyanin. This chain is Photosystem I P700 chlorophyll a apoprotein A1, found in Aethionema cordifolium (Lebanon stonecress).